The following is a 2093-amino-acid chain: Nuclear-pore anchor (2093 aa).

4 coiled-coil regions span residues 57-362, 439-529, 570-627, and 688-1172; these read LEQK…TDEL, MILQ…RDVQ, DING…RAEE, and QEKA…LEAK. The tract at residues 1175–1198 is disordered; it reads NSAEKNSRSGTISSGSTDSDHLED. Low complexity predominate over residues 1182–1191; that stretch reads RSGTISSGST. 2 coiled-coil regions span residues 1208–1252 and 1293–1585; these read LRRT…AERA and EKCQ…LKHA. 3 disordered regions span residues 1453-1489, 1525-1555, and 1627-2093; these read YEKE…AVVE, KKDE…KKEK, and SNSQ…PSPP. Over residues 1470–1483 the composition is skewed to basic and acidic residues; the sequence is QLEEAKEEAGKRTT. Residues 1652-1674 show a composition bias toward polar residues; the sequence is STMTRVPSSTPLIKSPVATTQQL. Basic and acidic residues-rich tracts occupy residues 1710–1719 and 1729–1740; these read KPEESPKVDV and DEGKQPAAHEPE. Over residues 1764 to 1779 the composition is skewed to polar residues; the sequence is SEPQQDSLTQGETSSE. Positions 1789–1808 are enriched in basic and acidic residues; it reads KGSESHPDTSEGENLAKEPA. Residues 1818–1849 adopt a coiled-coil conformation; sequence TTDGDNEETEAENAEEKTEEYVEAQQDNEADE. Composition is skewed to acidic residues over residues 1821-1830 and 1838-1903; these read GDNEETEAEN and YVEA…EEGT. The segment covering 1921–1931 has biased composition (polar residues); it reads TLATPTQSPSR. Residues 1935-1963 are compositionally biased toward acidic residues; that stretch reads AMEEAETTIETPVEDDKTDEGGDAAEEAA. A compositionally biased stretch (low complexity) spans 1984–2009; that stretch reads TSAATTSPVSTAPTTSSTLASAITSS. Phosphoserine is present on serine 2022.

As to quaternary structure, part of the nuclear pore complex (NPC). The NPC has an eight-fold symmetrical structure comprising a central transport channel and two rings, the cytoplasmic and nuclear rings, to which eight filaments are attached. The cytoplasmic filaments have loose ends, while the nuclear filaments are joined in a distal ring, forming a nuclear basket. NPCs are highly dynamic in configuration and composition, and can be devided in 3 subcomplexes, the NUP62 subcomplex, the NUP107-160 subcomplex and the NUP93 subcomplex, containing approximately 30 different nucleoporin proteins. Interacts with MAD1 and (via N-terminus) with ESD4. In terms of tissue distribution, ubiquitous. Highest expression in the shoot apical region.

Its subcellular location is the nucleus envelope. The protein resides in the nucleus membrane. It localises to the nucleus. It is found in the nuclear pore complex. Functionally, component of the nuclear pore complex. Acts as a docking site for activities required for desumoylation and mRNA export. Required for the proper expression or localization of a subset of miRNAs. Plays a role in meristematic cell division by interacting with spindle assembly checkpoint proteins. The sequence is that of Nuclear-pore anchor from Arabidopsis thaliana (Mouse-ear cress).